The primary structure comprises 754 residues: Endothelin-converting enzyme 1 (754 aa).

The Cytoplasmic segment spans residues M1–R52. A Phosphothreonine modification is found at T9. Residues L53 to I73 traverse the membrane as a helical; Signal-anchor for type II membrane protein segment. Residues Q74–W754 lie on the Extracellular side of the membrane. The Peptidase M13 domain maps to V82–W754. 5 disulfides stabilise this stretch: C83-C88, C106-C739, C114-C699, C169-C419, and C628-C751. N150, N171, N194, N254, N300, N346, N367, and N523 each carry an N-linked (GlcNAc...) asparagine glycan. Position 591 (H591) interacts with Zn(2+). E592 is an active-site residue. H595 lines the Zn(2+) pocket. N616 and N635 each carry an N-linked (GlcNAc...) asparagine glycan. Position 651 (E651) interacts with Zn(2+). D655 functions as the Proton donor in the catalytic mechanism.

The protein belongs to the peptidase M13 family. Homodimer; disulfide-linked. Interacts with PPP1R16B. Interacts with TSPAN8; this interaction recruits the endothelin converting enzyme ECE1 to tetraspanin-enriched microdomains and positively modulates its enzymatic activity. Zn(2+) serves as cofactor.

It localises to the cell membrane. It carries out the reaction Hydrolysis of the 21-Trp-|-Val-22 bond in big endothelin to form endothelin 1.. Its activity is regulated as follows. Inhibited by phosphoramidon. In terms of biological role, converts big endothelin-1 to endothelin-1. The polypeptide is Endothelin-converting enzyme 1 (ECE1) (Bos taurus (Bovine)).